The chain runs to 284 residues: Hemin import ATP-binding protein HmuV (284 aa).

The ABC transporter domain occupies 33–266 (LGARHLSKSY…KLLSDVYSYE (234 aa)). An ATP-binding site is contributed by 65–72 (GPNGAGKS).

It belongs to the ABC transporter superfamily. Heme (hemin) importer (TC 3.A.1.14.5) family. The complex is composed of two ATP-binding proteins (HmuV), two transmembrane proteins (HmuU) and a solute-binding protein (HmuT).

Its subcellular location is the cell membrane. Functionally, part of the ABC transporter complex HmuTUV involved in hemin import. Responsible for energy coupling to the transport system. The protein is Hemin import ATP-binding protein HmuV of Thermobifida fusca (strain YX).